The chain runs to 376 residues: ORC1-type DNA replication protein 2 (376 aa).

ATP is bound by residues 73–77 (TGKTS), Tyr209, and Arg221.

The protein belongs to the CDC6/cdc18 family.

Functionally, involved in regulation of DNA replication. This chain is ORC1-type DNA replication protein 2 (cdc6-2), found in Archaeoglobus fulgidus (strain ATCC 49558 / DSM 4304 / JCM 9628 / NBRC 100126 / VC-16).